A 701-amino-acid polypeptide reads, in one-letter code: Elongation factor G (701 aa).

The 277-residue stretch at 10 to 286 (NKVRNIGIMA…AVIDYLPSPL (277 aa)) folds into the tr-type G domain. Residues 19 to 26 (AHIDAGKT), 83 to 87 (DTPGH), and 137 to 140 (NKMD) each bind GTP.

The protein belongs to the TRAFAC class translation factor GTPase superfamily. Classic translation factor GTPase family. EF-G/EF-2 subfamily.

Its subcellular location is the cytoplasm. Functionally, catalyzes the GTP-dependent ribosomal translocation step during translation elongation. During this step, the ribosome changes from the pre-translocational (PRE) to the post-translocational (POST) state as the newly formed A-site-bound peptidyl-tRNA and P-site-bound deacylated tRNA move to the P and E sites, respectively. Catalyzes the coordinated movement of the two tRNA molecules, the mRNA and conformational changes in the ribosome. The protein is Elongation factor G of Mycobacteroides abscessus (strain ATCC 19977 / DSM 44196 / CCUG 20993 / CIP 104536 / JCM 13569 / NCTC 13031 / TMC 1543 / L948) (Mycobacterium abscessus).